We begin with the raw amino-acid sequence, 88 residues long: Putative regulatory protein PCC7424_3427 (88 aa).

The protein belongs to the RemA family.

The chain is Putative regulatory protein PCC7424_3427 from Gloeothece citriformis (strain PCC 7424) (Cyanothece sp. (strain PCC 7424)).